The primary structure comprises 387 residues: Sedoheptulose-1,7-bisphosphatase, chloroplastic (387 aa).

Cysteine 109 and cysteine 114 are disulfide-bonded. Mg(2+) contacts are provided by aspartate 120, glutamate 149, aspartate 170, leucine 172, and aspartate 173. Residues aspartate 173 to serine 176, tyrosine 284, and lysine 314 each bind substrate. Mg(2+) is bound at residue glutamate 320.

The protein belongs to the FBPase class 1 family. Homodimer. Mg(2+) serves as cofactor.

It is found in the plastid. The protein resides in the chloroplast. The enzyme catalyses D-sedoheptulose 1,7-bisphosphate + H2O = D-sedoheptulose 7-phosphate + phosphate. Its pathway is carbohydrate biosynthesis; Calvin cycle. This is Sedoheptulose-1,7-bisphosphatase, chloroplastic from Spinacia oleracea (Spinach).